The following is a 425-amino-acid chain: Enolase (425 aa).

(2R)-2-phosphoglycerate is bound at residue glutamine 162. Glutamate 204 serves as the catalytic Proton donor. Residues aspartate 241, glutamate 282, and aspartate 309 each contribute to the Mg(2+) site. (2R)-2-phosphoglycerate-binding residues include lysine 334, arginine 363, serine 364, and lysine 385. Lysine 334 acts as the Proton acceptor in catalysis.

The protein belongs to the enolase family. Mg(2+) is required as a cofactor.

It is found in the cytoplasm. The protein resides in the secreted. Its subcellular location is the cell surface. It carries out the reaction (2R)-2-phosphoglycerate = phosphoenolpyruvate + H2O. It participates in carbohydrate degradation; glycolysis; pyruvate from D-glyceraldehyde 3-phosphate: step 4/5. Its function is as follows. Catalyzes the reversible conversion of 2-phosphoglycerate (2-PG) into phosphoenolpyruvate (PEP). It is essential for the degradation of carbohydrates via glycolysis. The chain is Enolase from Corynebacterium aurimucosum (strain ATCC 700975 / DSM 44827 / CIP 107346 / CN-1) (Corynebacterium nigricans).